Consider the following 261-residue polypeptide: Zinc import ATP-binding protein ZnuC (261 aa).

Residues 6–221 (IRLEKVAVRF…PAFVELFGNN (216 aa)) form the ABC transporter domain. An ATP-binding site is contributed by 38–45 (GPNGAGKT).

Belongs to the ABC transporter superfamily. Zinc importer (TC 3.A.1.15.5) family. In terms of assembly, the complex is composed of two ATP-binding proteins (ZnuC), two transmembrane proteins (ZnuB) and a solute-binding protein (ZnuA).

It is found in the cell inner membrane. The enzyme catalyses Zn(2+)(out) + ATP(in) + H2O(in) = Zn(2+)(in) + ADP(in) + phosphate(in) + H(+)(in). Functionally, part of the ABC transporter complex ZnuABC involved in zinc import. Responsible for energy coupling to the transport system. The chain is Zinc import ATP-binding protein ZnuC from Pseudomonas fluorescens (strain Pf0-1).